The following is a 282-amino-acid chain: MTAVSAMSWWQVIVLAVVQGLTEFLPVSSSGHLAIVSRILFTGDAGASFTAVSQLGTEVAVLVYFGRDIVRILHAWCRGLTVTLHRTADYWLGWYVIIGTIPICILGLVCKDEIRSGIRPLWVVATALVAFSGVIAFAEYVGRQNRCIEQLNWRDALVVGVAQTLALIPGVSRSGSTISAGLFLGLDRELAARFGFLLAIPAVFASGLFSIPDAFHPITEGMSATGAQLLVATVIAFVVGLVAVSWLLRFLVQHNLYWFVGYRIVVGVGVLILLAVKTVAAT.

A run of 6 helical transmembrane segments spans residues tyrosine 90–cysteine 110, leucine 121–valine 141, leucine 165–glycine 185, phenylalanine 194–alanine 214, glutamine 228–leucine 248, and leucine 256–valine 276.

The protein belongs to the UppP family.

Its subcellular location is the cell membrane. The catalysed reaction is di-trans,octa-cis-undecaprenyl diphosphate + H2O = di-trans,octa-cis-undecaprenyl phosphate + phosphate + H(+). In terms of biological role, catalyzes the dephosphorylation of undecaprenyl diphosphate (UPP). Confers resistance to bacitracin. This Mycobacterium leprae (strain Br4923) protein is Undecaprenyl-diphosphatase.